The chain runs to 455 residues: MDTNNNIEKEILALAKQKVSLIEYENYLSQIKYNPNASKSDIAFFYAPNKVLCTTITAKYGALLKEILSQNKVGMHLAHSVDVRIEVAPKIQINAQANINYKAIKTSVKDSYTFENFVVGSCNNTVYEIAKKVAQSDTPPYNPVLFYGGTGLGKTHILNAIGNHALEKHKKVVLVTSEDFLTDFLKHLDNKTMDSFKAKYRHCDFFLLDDAQFLQGKPKLEEEFFHTFNELHANSKQIVLISDRSPKNIAGLEDRLKSRFEWGITAKVMPPNLETKLSIVKQKCQLNQITLPEEVMEYIAQHISDNIRQMEGAIIKISVNANLMNAPIDLNLAKTVLEDLQKDHAEGSSLENILLAVAQSLNLKSSEIKVSSRQKNVALARKLVVYFARLYTPNPTLSLAQFLDLKDHSSISKMYSSVKKMLEEEKNPFILSLREEIKNRLNELNDKKTAFNSSE.

Residues 1-75 form a domain I, interacts with DnaA modulators region; it reads MDTNNNIEKE…EILSQNKVGM (75 aa). Positions 75–106 are domain II; it reads MHLAHSVDVRIEVAPKIQINAQANINYKAIKT. The domain III, AAA+ region stretch occupies residues 107-321; the sequence is SVKDSYTFEN…GAIIKISVNA (215 aa). ATP contacts are provided by G151, G153, K154, and T155. The tract at residues 322–455 is domain IV, binds dsDNA; the sequence is NLMNAPIDLN…DKKTAFNSSE (134 aa).

Belongs to the DnaA family. As to quaternary structure, oligomerizes as a right-handed, spiral filament on DNA at oriC.

It is found in the cytoplasm. Functionally, plays an essential role in the initiation and regulation of chromosomal replication. ATP-DnaA binds to the origin of replication (oriC) to initiate formation of the DNA replication initiation complex once per cell cycle. Binds the DnaA box (a 9 base pair repeat at the origin) and separates the double-stranded (ds)DNA. Forms a right-handed helical filament on oriC DNA; dsDNA binds to the exterior of the filament while single-stranded (ss)DNA is stabiized in the filament's interior. The ATP-DnaA-oriC complex binds and stabilizes one strand of the AT-rich DNA unwinding element (DUE), permitting loading of DNA polymerase. After initiation quickly degrades to an ADP-DnaA complex that is not apt for DNA replication. Binds acidic phospholipids. This Helicobacter pylori (strain P12) protein is Chromosomal replication initiator protein DnaA.